The primary structure comprises 244 residues: Orotidine 5'-phosphate decarboxylase (244 aa).

Substrate contacts are provided by residues Asp12, Lys34, Asp61–Thr70, Thr125, Arg187, Gln196, Gly216, and Arg217. Residue Lys63 is the Proton donor of the active site.

This sequence belongs to the OMP decarboxylase family. Type 1 subfamily. As to quaternary structure, homodimer.

It carries out the reaction orotidine 5'-phosphate + H(+) = UMP + CO2. It participates in pyrimidine metabolism; UMP biosynthesis via de novo pathway; UMP from orotate: step 2/2. Functionally, catalyzes the decarboxylation of orotidine 5'-monophosphate (OMP) to uridine 5'-monophosphate (UMP). The chain is Orotidine 5'-phosphate decarboxylase from Dictyoglomus thermophilum (strain ATCC 35947 / DSM 3960 / H-6-12).